A 923-amino-acid polypeptide reads, in one-letter code: Hexokinase-3 (923 aa).

Polar residues predominate over residues 1–18 (MDSIGSSGLRQGEETLSC). The tract at residues 1–30 (MDSIGSSGLRQGEETLSCSEEGLPGPSDSS) is disordered. Hexokinase domains follow at residues 27–471 (SDSS…MVTA) and 477–912 (AAHR…LVTA). Residues 84 to 220 (HGTEQGDFVV…AYNIDVVAVV (137 aa)) form a hexokinase small subdomain 1 region. ATP is bound at residue 95–102 (ELGATGAS). 95-104 (ELGATGASLR) serves as a coordination point for D-glucose 6-phosphate. Residues serine 168, 185-186 (TK), and 221-222 (ND) each bind D-glucose. Residues 221–460 (NDTVGTMMGC…CDVSLIPSVD (240 aa)) form a hexokinase large subdomain 1 region. The D-glucose 6-phosphate site is built by aspartate 222 and threonine 245. D-glucose contacts are provided by residues asparagine 248, glutamate 273, and 304 to 307 (QRFE). 426 to 428 (GGR) is a binding site for D-glucose 6-phosphate. ATP is bound by residues 438–439 (SV) and 542–547 (DLGGTN). Residues 531-661 (DGSERGDFLA…AVELNVVAIV (131 aa)) form a hexokinase small subdomain 2 region. 542–546 (DLGGT) contributes to the D-glucose 6-phosphate binding site. Residues 609–610 (SF), 626–627 (TK), and 662–663 (ND) each bind D-glucose. The segment at 662 to 901 (NDTVGTMMSC…CVVTFLQSED (240 aa)) is hexokinase large subdomain 2. Positions 663 and 686 each coordinate D-glucose 6-phosphate. An ATP-binding site is contributed by threonine 686. Residues 688–689 (TN), glutamate 714, and glutamate 748 contribute to the D-glucose site. Residues 753 to 754 (GM), 790 to 794 (TKFLS), and 869 to 873 (TLYKL) each bind ATP. Residues 867–869 (DGT) and serine 903 each bind D-glucose 6-phosphate.

This sequence belongs to the hexokinase family.

The catalysed reaction is a D-hexose + ATP = a D-hexose 6-phosphate + ADP + H(+). It carries out the reaction D-fructose + ATP = D-fructose 6-phosphate + ADP + H(+). It catalyses the reaction D-glucose + ATP = D-glucose 6-phosphate + ADP + H(+). It participates in carbohydrate metabolism; hexose metabolism. Its pathway is carbohydrate degradation; glycolysis; D-glyceraldehyde 3-phosphate and glycerone phosphate from D-glucose: step 1/4. With respect to regulation, hexokinase is an allosteric enzyme inhibited by its product D-glucose 6-phosphate. Functionally, catalyzes the phosphorylation of hexose, such as D-glucose and D-fructose, to hexose 6-phosphate (D-glucose 6-phosphate and D-fructose 6-phosphate, respectively). Mediates the initial step of glycolysis by catalyzing phosphorylation of D-glucose to D-glucose 6-phosphate. The protein is Hexokinase-3 of Homo sapiens (Human).